A 395-amino-acid chain; its full sequence is Fractalkine (395 aa).

The signal sequence occupies residues 1 to 24; that stretch reads MAPSPLAWLLRLAAFFHLCTLLPG. A chemokine and involved in interaction with ITGAV:ITGB3 and ITGA4:ITGB1 region spans residues 25–100; it reads QHLGMTKCEI…HQAAALTKNG (76 aa). Over 25 to 336 the chain is Extracellular; sequence QHLGMTKCEI…TPVPDTQAAT (312 aa). Disulfide bonds link Cys-32–Cys-58 and Cys-36–Cys-74. The mucin-like stalk stretch occupies residues 101–336; it reads GKFEKRVDNV…TPVPDTQAAT (236 aa). Polar residues-rich tracts occupy residues 148–172 and 201–210; these read ARGT…TSEA and AVYQSGSSSW. 2 disordered regions span residues 148–180 and 201–305; these read ARGT…LTAK and AVYQ…SGSQ. The span at 218–236 shows a compositional bias: low complexity; it reads SPSTTAPSPQVSTTSPSTP. A helical transmembrane segment spans residues 337–357; it reads RRQAVGLLAFLGLLFCLGVAM. The Cytoplasmic segment spans residues 358 to 395; the sequence is FAYQSLQGCPRKMAGEMVEGLRYVPRSCGSNSYVLVPV.

This sequence belongs to the intercrine delta family. As to quaternary structure, monomer. Forms a ternary complex with CX3CR1 and ITGAV:ITGB3 or ITGA4:ITGB1. Post-translationally, a soluble short 80 kDa form may be released by proteolytic cleavage from the long membrane-anchored form. Highest levels in brain. Lower levels in kidney, heart and lung. Also found in skeletal muscle and testis. Highly expressed in lesional smooth muscle cells, but not macrophages. Low levels of ABCD-3 mRNA were also found in anti-CD40-stimulated splenic B-cells, but not in resting B-cells. Also expressed in dendritic cells.

It localises to the cell membrane. It is found in the secreted. Functionally, chemokine that acts as a ligand for both CX3CR1 and integrins ITGAV:ITGB3 and ITGA4:ITGB1. The CX3CR1-CX3CL1 signaling exerts distinct functions in different tissue compartments, such as immune response, inflammation, cell adhesion and chemotaxis. Regulates leukocyte adhesion and migration processes at the endothelium. Can activate integrins in both a CX3CR1-dependent and CX3CR1-independent manner. In the presence of CX3CR1, activates integrins by binding to the classical ligand-binding site (site 1) in integrins. In the absence of CX3CR1, binds to a second site (site 2) in integrins which is distinct from site 1 and enhances the binding of other integrin ligands to site 1. In terms of biological role, the soluble form is chemotactic for T-cells and monocytes, but not for neutrophils. Its function is as follows. The membrane-bound form promotes adhesion of those leukocytes to endothelial cells. The chain is Fractalkine from Mus musculus (Mouse).